The chain runs to 420 residues: D-tagatose-1,6-bisphosphate aldolase subunit GatZ (420 aa).

Belongs to the GatZ/KbaZ family. GatZ subfamily. In terms of assembly, forms a complex with GatY.

It functions in the pathway carbohydrate metabolism; D-tagatose 6-phosphate degradation; D-glyceraldehyde 3-phosphate and glycerone phosphate from D-tagatose 6-phosphate: step 2/2. Component of the tagatose-1,6-bisphosphate aldolase GatYZ that is required for full activity and stability of the Y subunit. Could have a chaperone-like function for the proper and stable folding of GatY. When expressed alone, GatZ does not show any aldolase activity. Is involved in the catabolism of galactitol. This is D-tagatose-1,6-bisphosphate aldolase subunit GatZ from Shigella boydii serotype 18 (strain CDC 3083-94 / BS512).